The primary structure comprises 390 residues: MAPALTALNRCFVLGILLLVTAGTAFSQEVQAENVTVVEGSTVEISCHLHQYDGSIVVIQNPVRQTLFFNGTRALKDTRFQLVEFTQKVVKIHLSDAKLEDEGGYFCQLYTEDTHHQIATLTVIVPPDNPLVEVKEQAVEGGEIELTCISPRTKPAATLRWYRDRKELKGFTSKQENGKTFSITNSIRFNVDRKDDGNIVTCEASHPALKGQKKQTQYELDVQFSPTASIQPSQSLVRDGDELNLKCEVTGNPRPTEIIWTRLNDSLPDRAQIQGDLLSFPSLNLQDNGTYSCQVSNKHGRSSDQYVLVVYDPGAIIEAQTQVPYAVIGGILALLVFLVICILIVMVWCSVRQKGSYLTHEASGLDEHGEAREAFLNGGENHKRKEEFFI.

Residues 1 to 27 (MAPALTALNRCFVLGILLLVTAGTAFS) form the signal peptide. The Ig-like V-type domain occupies 28–122 (QEVQAENVTV…DTHHQIATLT (95 aa)). The Extracellular segment spans residues 28–326 (QEVQAENVTV…IEAQTQVPYA (299 aa)). 2 N-linked (GlcNAc...) asparagine glycosylation sites follow: asparagine 34 and asparagine 70. Cystine bridges form between cysteine 47/cysteine 107, cysteine 148/cysteine 202, and cysteine 247/cysteine 293. Ig-like C2-type domains follow at residues 127-219 (PDNP…TQYE) and 226-309 (PTAS…YVLV). Residues asparagine 264 and asparagine 288 are each glycosylated (N-linked (GlcNAc...) asparagine). A helical transmembrane segment spans residues 327 to 347 (VIGGILALLVFLVICILIVMV). At 348–390 (WCSVRQKGSYLTHEASGLDEHGEAREAFLNGGENHKRKEEFFI) the chain is on the cytoplasmic side.

The protein belongs to the nectin family.

The protein localises to the membrane. Involved in the cell-cell adhesion. The polypeptide is Cell adhesion molecule 4 (cadm4) (Xenopus laevis (African clawed frog)).